The sequence spans 143 residues: Transcriptional regulator MraZ (143 aa).

SpoVT-AbrB domains lie at 5 to 47 and 76 to 119; these read EYDH…TLDE and AVEV…DRET.

The protein belongs to the MraZ family. As to quaternary structure, forms oligomers.

It is found in the cytoplasm. The protein localises to the nucleoid. The protein is Transcriptional regulator MraZ of Staphylococcus aureus (strain Mu3 / ATCC 700698).